Reading from the N-terminus, the 318-residue chain is uncharacterized protein (318 aa).

Over residues 1–22 (MKASQERSEARRTAHSVKEKKY) the composition is skewed to basic and acidic residues. Disordered stretches follow at residues 1–29 (MKASQERSEARRTAHSVKEKKYMVMASPR) and 293–318 (DDGDDGDGDDDGDDDGDDDGGDDDDE).

This is an uncharacterized protein from Ictalurid herpesvirus 1 (strain Auburn) (IcHV-1).